The primary structure comprises 276 residues: Rhomboid protease GlpG (276 aa).

The next 6 membrane-spanning stretches (helical) occupy residues Gly94–Val114, Ala142–Gly162, Leu169–Gln189, Phe192–Trp212, Leu229–Ile249, and Ala250–Leu270. Ser201 serves as the catalytic Nucleophile. Residue His254 is part of the active site.

Belongs to the peptidase S54 family.

It is found in the cell inner membrane. The catalysed reaction is Cleaves type-1 transmembrane domains using a catalytic dyad composed of serine and histidine that are contributed by different transmembrane domains.. Its function is as follows. Rhomboid-type serine protease that catalyzes intramembrane proteolysis. This chain is Rhomboid protease GlpG, found in Enterobacter sp. (strain 638).